The sequence spans 478 residues: Putative sulfate transporter YbaR (478 aa).

Transmembrane regions (helical) follow at residues 19-39 (ILAG…FSII), 42-62 (VDPM…SIFG), 65-85 (PGMI…LVAD), 87-107 (GLQY…ILGI), 121-141 (VMIG…LPQF), 143-163 (GASW…YVLP), 168-188 (AVPS…TFHV), 220-240 (IIFP…LLTA), 259-279 (GQGI…CAMI), 295-315 (SAFV…HVVV), 345-365 (APLT…VTDD), and 366-386 (LSKG…AKIS). The STAS domain occupies 389 to 478 (KIVSHAEDQK…ASKSLMKQMA (90 aa)).

Belongs to the SLC26A/SulP transporter (TC 2.A.53) family.

It is found in the cell membrane. This Bacillus subtilis (strain 168) protein is Putative sulfate transporter YbaR (ybaR).